The following is a 487-amino-acid chain: uncharacterized protein (487 aa).

The first 31 residues, 1–31 (MRFHRQGISAIIGVLLIVLLGFCWKLSGSYG), serve as a signal peptide directing secretion. 8 N-linked (GlcNAc...) asparagine glycosylation sites follow: N40, N68, N150, N220, N304, N367, N442, and N448. The interval 141-176 (LERRHGRFGNGTNGDHPKGPPPPPPPPDEKGRGSQK) is disordered.

In terms of processing, N-glycosylated.

This is an uncharacterized protein from Saccharomyces cerevisiae (strain ATCC 204508 / S288c) (Baker's yeast).